The chain runs to 487 residues: 2-aminomuconic semialdehyde dehydrogenase (487 aa).

231–236 serves as a coordination point for NAD(+); it reads GSTATA. E253 (proton acceptor) is an active-site residue. The Nucleophile role is filled by C287.

It belongs to the aldehyde dehydrogenase family.

Its subcellular location is the cytoplasm. The enzyme catalyses 2-aminomuconate 6-semialdehyde + NAD(+) + H2O = (2Z,4E)-2-aminomuconate + NADH + 2 H(+). Its pathway is amino-acid degradation; L-kynurenine degradation. In terms of biological role, catalyzes the NAD-dependent oxidation of 2-aminomuconic semialdehyde of the kynurenine metabolic pathway in L-tryptophan degradation. The protein is 2-aminomuconic semialdehyde dehydrogenase (aldh8a1) of Danio rerio (Zebrafish).